A 129-amino-acid polypeptide reads, in one-letter code: Small ribosomal subunit protein uS11 (129 aa).

The protein belongs to the universal ribosomal protein uS11 family. Part of the 30S ribosomal subunit. Interacts with proteins S7 and S18. Binds to IF-3.

Located on the platform of the 30S subunit, it bridges several disparate RNA helices of the 16S rRNA. Forms part of the Shine-Dalgarno cleft in the 70S ribosome. The protein is Small ribosomal subunit protein uS11 of Glaesserella parasuis serovar 5 (strain SH0165) (Haemophilus parasuis).